We begin with the raw amino-acid sequence, 310 residues long: Atrochrysone carboxyl ACP thioesterase CPUR_05436 (310 aa).

Zn(2+) is bound by residues histidine 105, histidine 107, aspartate 109, and histidine 110. Catalysis depends on aspartate 109, which acts as the Proton donor/acceptor.

The protein belongs to the metallo-beta-lactamase superfamily. Zn(2+) serves as cofactor.

The enzyme catalyses atrochrysone carboxyl-[ACP] + H2O = atrochrysone carboxylate + holo-[ACP] + H(+). Its pathway is pigment biosynthesis. In terms of biological role, atrochrysone carboxyl ACP thioesterase; part of the ergochrome gene cluster responsible for the typical purple-black color of the ergot sclerotia. The ergochrome gene cluster produces several ergot pigments including the yellow ergochrome secalonic acid and its derivatives, as well as the red anthraquinones endocrocin and clavorubin. The pathway begins with the synthesis of atrochrysone thioester by the polyketide synthase (PKS) CPUR_05437. The atrochrysone carboxyl ACP thioesterase CPUR_05436 then breaks the thioester bond and releases the atrochrysone carboxylic acid from CPUR_05437. The atrochrysone carboxylic acid is then converted to atrochrysone which is further transformed into emodin anthrone. The next step is performed by the anthrone oxygenase CPUR_05434 that catalyzes the oxidation of emodinanthrone to emodin. Emodin is further modified to yield monodictyphenone via several steps involving CPUR_05427, CPUR_05428, CPUR_05429 and CPUR_05430. The short chain dehydrogenase/reductase CPUR_05418 then catalyzes the C-5 ketoreduction to give the xanthone skeleton of the monomeric units. Ergochromes formation requires further dimerization steps of different xanthone units, probably catalyzed by the cytochrome P450 monooxygenase CPUR_05419. CPUR_05425, CPUR_05426 and CPUR_05431 are unique to Claviceps, thus it is likely that they are involved in further modification of xanthone units or in their dimerization. The yellow ergochromes and the red anthraquinone pigments endocrocin and clavorubin are products from the same PKS derived precursors and the latter are likely shunt products in the pathway of xanthone biosynthesis. It is proposed that atrochrysone carboxylic acid released from the PKS CPUR_05437 can also be converted to endocrocin anthrone which is further oxidized into endocrocin by CPUR_05435. Endocrocin could be then modified to clavorubin, possibly by CPUR_05423 and CPUR_05431. Clavorubin is the principal anthraquinone metabolite produced by the cluster with a much higher yield compared to endocrocin. The sequence is that of Atrochrysone carboxyl ACP thioesterase CPUR_05436 from Claviceps purpurea (strain 20.1) (Ergot fungus).